Consider the following 436-residue polypeptide: MDTTVMIEEHPQIKELIAKRPIVWQNPDYGKRADLPLTRADIFDAVARWERFAPFLAVAFPETAAMNGIIESPLLPLEQMKPAWEALNHQSLAGQLYLKADSQLPISGSIKSRGGIYEVLKFAEQVAMAHTDLTYMDDYSVLATAKYHELFAQYGVIVASTGNLALSVGIMAATFGFKTTVYMSHDARQWKKDKLRANGVTVEELNTDFSSVIPVARAAAAKDDHTHFVDDEGSRDLFLGYAVAGVRLQHQLKVQGIKMDAAHPVVVYLPAGVGGSPSGVAFGLKMIMGANIYPVFCEPTHVPSVTLGMMTKLNEKIAVQDIGLDGLTAADGLAVSRPSRLAGKVMRTLLLGTATFEDDDLYRYLTKLVDTEDVIVEPSAAAGFTAIAPIMAQFPTLAGKDVTHIVWATGGDMMPESERQLDYELGQKLLTKINNR.

K111 is subject to N6-(pyridoxal phosphate)lysine.

This sequence belongs to the serine/threonine dehydratase family. DsdA subfamily. The cofactor is pyridoxal 5'-phosphate.

It catalyses the reaction D-serine = pyruvate + NH4(+). This is Probable D-serine dehydratase from Lactiplantibacillus plantarum (strain ATCC BAA-793 / NCIMB 8826 / WCFS1) (Lactobacillus plantarum).